The chain runs to 454 residues: GA-binding protein alpha chain (454 aa).

In terms of domain architecture, PNT spans 168–251 (AALEGYRKEQ…SHLELLRKYV (84 aa)). The interval 295–316 (KVQRSPRISGEDRSSPGNRTGN) is disordered. The residue at position 303 (S303) is a Phosphoserine. Positions 320–400 (IQLWQFLLEL…QGKRFVYKFV (81 aa)) form a DNA-binding region, ETS.

Belongs to the ETS family. Heterotetramer of two alpha and two beta subunits. Ubiquitous.

Its subcellular location is the nucleus. Its function is as follows. Transcription factor capable of interacting with purine rich repeats (GA repeats). Positively regulates transcription of transcriptional repressor Rhit/Zpf13. This Mus musculus (Mouse) protein is GA-binding protein alpha chain (Gabpa).